We begin with the raw amino-acid sequence, 145 residues long: U20-hexatoxin-Hi1a (145 aa).

Residues 1–16 (MYQFLIIVILAAFVNG) form the signal peptide. Thyroglobulin type-1 domains follow at residues 20 to 73 (KTEC…GQPM) and 82 to 145 (ACEC…RLEC). Intrachain disulfides connect cysteine 23/cysteine 45, cysteine 56/cysteine 63, cysteine 85/cysteine 106, cysteine 117/cysteine 124, and cysteine 126/cysteine 145.

Expressed by the venom gland.

It is found in the secreted. In terms of biological role, cysteine proteinase inhibitor. This Hadronyche infensa (Fraser island funnel-web spider) protein is U20-hexatoxin-Hi1a.